Here is a 107-residue protein sequence, read N- to C-terminus: Nucleoid-associated protein AZOSEA06390 (107 aa).

This sequence belongs to the YbaB/EbfC family. As to quaternary structure, homodimer.

The protein resides in the cytoplasm. The protein localises to the nucleoid. In terms of biological role, binds to DNA and alters its conformation. May be involved in regulation of gene expression, nucleoid organization and DNA protection. This is Nucleoid-associated protein AZOSEA06390 from Aromatoleum aromaticum (strain DSM 19018 / LMG 30748 / EbN1) (Azoarcus sp. (strain EbN1)).